The following is a 671-amino-acid chain: DNA ligase (671 aa).

NAD(+) is bound by residues 32–36 (DAEYD), 81–82 (SL), and Glu-113. Lys-115 acts as the N6-AMP-lysine intermediate in catalysis. Arg-136, Glu-173, Lys-290, and Lys-314 together coordinate NAD(+). The Zn(2+) site is built by Cys-408, Cys-411, Cys-426, and Cys-432. One can recognise a BRCT domain in the interval 593 to 671 (EIDSPFAGKT…ETEMLRLLGS (79 aa)).

Belongs to the NAD-dependent DNA ligase family. LigA subfamily. Mg(2+) serves as cofactor. Mn(2+) is required as a cofactor.

It catalyses the reaction NAD(+) + (deoxyribonucleotide)n-3'-hydroxyl + 5'-phospho-(deoxyribonucleotide)m = (deoxyribonucleotide)n+m + AMP + beta-nicotinamide D-nucleotide.. DNA ligase that catalyzes the formation of phosphodiester linkages between 5'-phosphoryl and 3'-hydroxyl groups in double-stranded DNA using NAD as a coenzyme and as the energy source for the reaction. It is essential for DNA replication and repair of damaged DNA. The chain is DNA ligase from Escherichia coli O6:H1 (strain CFT073 / ATCC 700928 / UPEC).